The primary structure comprises 104 residues: Iron-sulfur cluster assembly protein CyaY (104 aa).

The protein belongs to the frataxin family.

Its function is as follows. Involved in iron-sulfur (Fe-S) cluster assembly. May act as a regulator of Fe-S biogenesis. This chain is Iron-sulfur cluster assembly protein CyaY, found in Vibrio vulnificus (strain CMCP6).